The sequence spans 367 residues: Alanine racemase (367 aa).

Catalysis depends on lysine 40, which acts as the Proton acceptor; specific for D-alanine. Lysine 40 bears the N6-(pyridoxal phosphate)lysine mark. Residue arginine 136 coordinates substrate. Tyrosine 263 serves as the catalytic Proton acceptor; specific for L-alanine. Methionine 310 contributes to the substrate binding site.

Belongs to the alanine racemase family. It depends on pyridoxal 5'-phosphate as a cofactor.

It carries out the reaction L-alanine = D-alanine. The protein operates within amino-acid biosynthesis; D-alanine biosynthesis; D-alanine from L-alanine: step 1/1. Catalyzes the interconversion of L-alanine and D-alanine. May also act on other amino acids. In Lactococcus lactis subsp. lactis (strain IL1403) (Streptococcus lactis), this protein is Alanine racemase (alr).